The following is a 275-amino-acid chain: 3-methyl-2-oxobutanoate hydroxymethyltransferase (275 aa).

Residues D44 and D83 each contribute to the Mg(2+) site. 3-methyl-2-oxobutanoate-binding positions include 44-45 (DS), D83, and K113. E115 is a binding site for Mg(2+). E182 acts as the Proton acceptor in catalysis.

It belongs to the PanB family. Homodecamer; pentamer of dimers. It depends on Mg(2+) as a cofactor.

Its subcellular location is the cytoplasm. It catalyses the reaction 3-methyl-2-oxobutanoate + (6R)-5,10-methylene-5,6,7,8-tetrahydrofolate + H2O = 2-dehydropantoate + (6S)-5,6,7,8-tetrahydrofolate. Its pathway is cofactor biosynthesis; (R)-pantothenate biosynthesis; (R)-pantoate from 3-methyl-2-oxobutanoate: step 1/2. Catalyzes the reversible reaction in which hydroxymethyl group from 5,10-methylenetetrahydrofolate is transferred onto alpha-ketoisovalerate to form ketopantoate. The polypeptide is 3-methyl-2-oxobutanoate hydroxymethyltransferase (Enterococcus faecalis (strain ATCC 700802 / V583)).